The chain runs to 311 residues: Olfactory receptor 6C3 (311 aa).

The Extracellular segment spans residues 1 to 22 (MNHTMVTEFVLLGLSDDPDLQI). A glycan (N-linked (GlcNAc...) asparagine) is linked at Asn-2. Residues 23 to 43 (VIFLFLFITYILSVTGNLTII) form a helical membrane-spanning segment. The Cytoplasmic segment spans residues 44–51 (TLTFVDSH). Residues 52–72 (LQTPMYFFLRNFSFLEISFTT) traverse the membrane as a helical segment. The Extracellular segment spans residues 73–96 (VCIPRFLGAIITRNKTISYNNCAA). The cysteines at positions 94 and 186 are disulfide-linked. A helical membrane pass occupies residues 97–117 (QLFFFIFMGVTEFYILTAMSY). The Cytoplasmic portion of the chain corresponds to 118–136 (DRYVAICKPLHYTSIMNRK). Residues 137–157 (LCTLLVLCAWLSGFLTIFPPL) form a helical membrane-spanning segment. Residues 158 to 194 (MLLLQLDYCASNVIDHFACDYFPLLQLSCSDTWLLEV) are Extracellular-facing. A helical membrane pass occupies residues 195-214 (IGFYFALVTLLFTLALVILS). Residues 215–234 (YMYIIRTILRIPSASQRKKA) lie on the Cytoplasmic side of the membrane. A helical membrane pass occupies residues 235-255 (FSTCSSHMIVISISYGSCIFM). At 256-268 (YANPSAKEKASLT) the chain is on the extracellular side. A helical membrane pass occupies residues 269 to 289 (KGIAILNTSVAPMLNPFIYTL). The Cytoplasmic portion of the chain corresponds to 290–311 (RNQQVKQAFKNVVHKVVFYANQ).

It belongs to the G-protein coupled receptor 1 family.

It is found in the cell membrane. In terms of biological role, odorant receptor. This Homo sapiens (Human) protein is Olfactory receptor 6C3 (OR6C3).